A 385-amino-acid polypeptide reads, in one-letter code: Mannitol-1-phosphate 5-dehydrogenase (385 aa).

3 to 14 (ALQFGAGNIGRG) lines the NAD(+) pocket.

The protein belongs to the mannitol dehydrogenase family.

The enzyme catalyses D-mannitol 1-phosphate + NAD(+) = beta-D-fructose 6-phosphate + NADH + H(+). The polypeptide is Mannitol-1-phosphate 5-dehydrogenase (Buchnera aphidicola subsp. Acyrthosiphon pisum (strain 5A)).